Reading from the N-terminus, the 513-residue chain is ATP synthase subunit alpha (513 aa).

G169–T176 provides a ligand contact to ATP.

It belongs to the ATPase alpha/beta chains family. In terms of assembly, F-type ATPases have 2 components, CF(1) - the catalytic core - and CF(0) - the membrane proton channel. CF(1) has five subunits: alpha(3), beta(3), gamma(1), delta(1), epsilon(1). CF(0) has three main subunits: a(1), b(2) and c(9-12). The alpha and beta chains form an alternating ring which encloses part of the gamma chain. CF(1) is attached to CF(0) by a central stalk formed by the gamma and epsilon chains, while a peripheral stalk is formed by the delta and b chains.

Its subcellular location is the cell inner membrane. The enzyme catalyses ATP + H2O + 4 H(+)(in) = ADP + phosphate + 5 H(+)(out). Its function is as follows. Produces ATP from ADP in the presence of a proton gradient across the membrane. The alpha chain is a regulatory subunit. The chain is ATP synthase subunit alpha from Shewanella halifaxensis (strain HAW-EB4).